Reading from the N-terminus, the 395-residue chain is Sensor protein DltS (395 aa).

2 helical membrane-spanning segments follow: residues 9 to 29 (FVFL…AVSN) and 136 to 156 (FLIL…SLYL). A Histidine kinase domain is found at 177–387 (DASHELKTPI…RLEVQLPIDG (211 aa)). His-180 is subject to Phosphohistidine; by autocatalysis.

It is found in the cell membrane. It carries out the reaction ATP + protein L-histidine = ADP + protein N-phospho-L-histidine.. Functionally, member of the two-component regulatory system DltS/DltR. Regulates the expression of the dlt operon. Probably phosphorylates DltR. The sequence is that of Sensor protein DltS (dltS) from Streptococcus agalactiae serotype III (strain NEM316).